A 326-amino-acid chain; its full sequence is tRNA-modifying protein YgfZ (326 aa).

Folate-binding residues include W27 and W189.

This sequence belongs to the tRNA-modifying YgfZ family.

It is found in the cytoplasm. Folate-binding protein involved in regulating the level of ATP-DnaA and in the modification of some tRNAs. It is probably a key factor in regulatory networks that act via tRNA modification, such as initiation of chromosomal replication. The chain is tRNA-modifying protein YgfZ from Shigella boydii serotype 18 (strain CDC 3083-94 / BS512).